The sequence spans 574 residues: Probable cytochrome c oxidase subunit 1 (574 aa).

The chain crosses the membrane as a helical span at residues 40 to 60; sequence IGIMYCVACFIFFFVGGLLAL. His-86 is a binding site for Fe(II)-heme a. The next 6 helical transmembrane spans lie at 89 to 109, 121 to 141, 170 to 190, 213 to 233, 258 to 278, and 290 to 310; these read IMLL…VLPL, LNAF…AGFI, LWIM…VNMI, ILVT…ALFG, LFWF…FGIV, and IFGY…SVAV. Cu cation-binding residues include His-264 and Tyr-268. The segment at residues 264-268 is a cross-link (1'-histidyl-3'-tyrosine (His-Tyr)); it reads HPEVY. Residues His-313 and His-314 each contribute to the Cu cation site. 2 helical membrane-spanning segments follow: residues 315 to 335 and 359 to 379; these read MFAT…LIAV and MLFS…GVLL. His-397 lines the heme a3 pocket. Transmembrane regions (helical) follow at residues 398 to 418, 433 to 453, and 476 to 496; these read FHYV…YFWF, LHFW…HWLG, and VSTI…WNVF. Position 399 (His-399) interacts with Fe(II)-heme a.

This sequence belongs to the heme-copper respiratory oxidase family. In terms of assembly, associates with subunits II, III and IV to form cytochrome c oxidase. It depends on Cu(2+) as a cofactor. Requires heme as cofactor.

The protein localises to the cell membrane. It catalyses the reaction 4 Fe(II)-[cytochrome c] + O2 + 8 H(+)(in) = 4 Fe(III)-[cytochrome c] + 2 H2O + 4 H(+)(out). It participates in energy metabolism; oxidative phosphorylation. In terms of biological role, cytochrome c oxidase is the component of the respiratory chain that catalyzes the reduction of oxygen to water. Subunits 1-3 form the functional core of the enzyme complex. CO I is the catalytic subunit of the enzyme. Electrons originating in cytochrome c are transferred via the copper A center of subunit 2 and heme A of subunit 1 to the bimetallic center formed by heme A3 and copper B. In Mycobacterium leprae (strain TN), this protein is Probable cytochrome c oxidase subunit 1 (ctaD).